Reading from the N-terminus, the 303-residue chain is MQIKILGCESFGARSLACIVKTGERKILIDPGVALARLRYGLLPHPVEVAAALRVREKILAELEGTTDIVISHYHGDHMPMKAEDPYQLPVEALPDLKGVRFWCKGPGNISGLSARRRKEFFRYLGHSLPASEGISSEGVSFSPAVPHGTRDKGFGTVMMTRVSEEDEVFVHGSDIQLLDREAVMQILAWKPSVVFVSGPPLYLSHHVPEASNEALENALLLAENAGTLILDHHLLRFLEGYRWLKDLAGMVKNTVVCAAEFMGKKPELLDAQRKSLYEEMPVPRGWHEAYEKGEAGVEDYLL.

Belongs to the UPF0282 family.

In Methanosarcina mazei (strain ATCC BAA-159 / DSM 3647 / Goe1 / Go1 / JCM 11833 / OCM 88) (Methanosarcina frisia), this protein is UPF0282 protein MM_2966.